Here is a 470-residue protein sequence, read N- to C-terminus: Methylenetetrahydrofolate--tRNA-(uracil-5-)-methyltransferase TrmFO (470 aa).

An FAD-binding site is contributed by 10-15; that stretch reads GAGLAG.

It belongs to the MnmG family. TrmFO subfamily. FAD is required as a cofactor.

It is found in the cytoplasm. The catalysed reaction is uridine(54) in tRNA + (6R)-5,10-methylene-5,6,7,8-tetrahydrofolate + NADH + H(+) = 5-methyluridine(54) in tRNA + (6S)-5,6,7,8-tetrahydrofolate + NAD(+). It catalyses the reaction uridine(54) in tRNA + (6R)-5,10-methylene-5,6,7,8-tetrahydrofolate + NADPH + H(+) = 5-methyluridine(54) in tRNA + (6S)-5,6,7,8-tetrahydrofolate + NADP(+). In terms of biological role, catalyzes the folate-dependent formation of 5-methyl-uridine at position 54 (M-5-U54) in all tRNAs. The protein is Methylenetetrahydrofolate--tRNA-(uracil-5-)-methyltransferase TrmFO of Prochlorococcus marinus subsp. pastoris (strain CCMP1986 / NIES-2087 / MED4).